The primary structure comprises 328 residues: 2-hydroxyisoflavanone dehydratase (328 aa).

The short motif at 85–87 (HGG) is the Involved in the stabilization of the negatively charged intermediate by the formation of the oxyanion hole element. Catalysis depends on residues T173, D272, and H304.

This sequence belongs to the 'GDXG' lipolytic enzyme family.

The catalysed reaction is (2R,3S)-2,4',7-trihydroxyisoflavanone = daidzein + H2O + H(+). It carries out the reaction 2-hydroxy-2,3-dihydrogenistein = genistein + H2O + H(+). It catalyses the reaction a carboxylic ester + H2O = an alcohol + a carboxylate + H(+). Its pathway is secondary metabolite biosynthesis; flavonoid biosynthesis. In terms of biological role, dehydratase that mediates the biosynthesis of isoflavonoids. Can better use 2,7-dihydroxy-4'-methoxyisoflavanone as substrate. Has also a slight carboxylesterase activity toward p-nitrophenyl butyrate. The sequence is that of 2-hydroxyisoflavanone dehydratase (HIDM) from Glycyrrhiza echinata (Licorice).